A 248-amino-acid polypeptide reads, in one-letter code: Small ribosomal subunit protein uS3 (248 aa).

The KH type-2 domain maps to 39 to 111 (IRKYLNKVYK…EIVFNVVEVK (73 aa)). The disordered stretch occupies residues 222 to 248 (KPFEASAPRPQRRNRKEANNYVNAKKN).

The protein belongs to the universal ribosomal protein uS3 family. As to quaternary structure, part of the 30S ribosomal subunit. Forms a tight complex with proteins S10 and S14.

Its function is as follows. Binds the lower part of the 30S subunit head. Binds mRNA in the 70S ribosome, positioning it for translation. The sequence is that of Small ribosomal subunit protein uS3 from Alteracholeplasma palmae (strain ATCC 49389 / J233) (Acholeplasma palmae).